The sequence spans 431 residues: Shaggy-related protein kinase beta (431 aa).

Polar residues predominate over residues 12–24 (SGRNFVSSDNVGE). The segment at 12-65 (SGRNFVSSDNVGETETPRSKPNQNREETESTETTSYEKDSVSSSENSDHLPKEI) is disordered. 2 stretches are compositionally biased toward basic and acidic residues: residues 26–39 (ETPRSKPNQNREET) and 46–65 (SYEKDSVSSSENSDHLPKEI). In terms of domain architecture, Protein kinase spans 102 to 386 (YRAEHVIGTG…ALEACAHPFF (285 aa)). Residues 108-116 (IGTGSFGVV) and Lys-131 contribute to the ATP site. Asp-227 functions as the Proton acceptor in the catalytic mechanism. Position 262 is a phosphotyrosine (Tyr-262).

It belongs to the protein kinase superfamily. CMGC Ser/Thr protein kinase family. GSK-3 subfamily. Autophosphorylated mainly on threonine and serine residues.

It catalyses the reaction L-seryl-[protein] + ATP = O-phospho-L-seryl-[protein] + ADP + H(+). The catalysed reaction is L-threonyl-[protein] + ATP = O-phospho-L-threonyl-[protein] + ADP + H(+). Its function is as follows. May mediate extracellular signals to regulate transcription in differentiating cells. In Arabidopsis thaliana (Mouse-ear cress), this protein is Shaggy-related protein kinase beta.